The sequence spans 599 residues: Aspartate--tRNA(Asp/Asn) ligase (599 aa).

An L-aspartate-binding site is contributed by glutamate 183. Residues 207–210 (QIFK) are aspartate. Arginine 229 contributes to the L-aspartate binding site. ATP-binding positions include 229–231 (RDE) and glutamine 238. Histidine 456 lines the L-aspartate pocket. Position 490 (glutamate 490) interacts with ATP. Arginine 497 contacts L-aspartate. 542-545 (GLDR) lines the ATP pocket.

Belongs to the class-II aminoacyl-tRNA synthetase family. Type 1 subfamily. Homodimer.

Its subcellular location is the cytoplasm. The enzyme catalyses tRNA(Asx) + L-aspartate + ATP = L-aspartyl-tRNA(Asx) + AMP + diphosphate. Aspartyl-tRNA synthetase with relaxed tRNA specificity since it is able to aspartylate not only its cognate tRNA(Asp) but also tRNA(Asn). Reaction proceeds in two steps: L-aspartate is first activated by ATP to form Asp-AMP and then transferred to the acceptor end of tRNA(Asp/Asn). This chain is Aspartate--tRNA(Asp/Asn) ligase, found in Protochlamydia amoebophila (strain UWE25).